A 130-amino-acid chain; its full sequence is ATP synthase epsilon chain (130 aa).

This sequence belongs to the ATPase epsilon chain family. In terms of assembly, F-type ATPases have 2 components, CF(1) - the catalytic core - and CF(0) - the membrane proton channel. CF(1) has five subunits: alpha(3), beta(3), gamma(1), delta(1), epsilon(1). CF(0) has three main subunits: a, b and c.

It is found in the cell membrane. In terms of biological role, produces ATP from ADP in the presence of a proton gradient across the membrane. This chain is ATP synthase epsilon chain, found in Nocardia farcinica (strain IFM 10152).